A 186-amino-acid chain; its full sequence is Nicotinamidase/pyrazinamidase (186 aa).

The active-site Proton acceptor is the aspartate 8. The Fe cation site is built by aspartate 49, histidine 51, histidine 57, and histidine 71. Residue lysine 96 is part of the active site. Cysteine 138 functions as the Nucleophile in the catalytic mechanism.

It belongs to the isochorismatase family. Monomer. The cofactor is Mn(2+). Requires Fe(2+) as cofactor.

It catalyses the reaction nicotinamide + H2O = nicotinate + NH4(+). The enzyme catalyses pyrazinamide + H2O = pyrazine-2-carboxylate + NH4(+). Its pathway is cofactor biosynthesis; nicotinate biosynthesis; nicotinate from nicotinamide: step 1/1. With respect to regulation, is inhibited by Cu(2+), Zn(2+) and Fe(3+). Its function is as follows. Catalyzes the deamidation of nicotinamide (NAM) into nicotinate. Likely functions in the cyclical salvage pathway for production of NAD from nicotinamide. In terms of biological role, is involved in the activation of the first-line antituberculous drug pyrazinamide (PZA) by converting it into the active form, pyrazinoic acid. This is Nicotinamidase/pyrazinamidase from Mycobacterium tuberculosis (strain ATCC 25618 / H37Rv).